We begin with the raw amino-acid sequence, 489 residues long: Peroxisome assembly protein 12 (489 aa).

Topologically, residues 1-17 (MEYLPSLQQEFDELKPS) are peroxisomal matrix. Residues 18-45 (LFELLAEQQLSDLLPPSIRYILAVATHR) traverse the membrane as a helical segment. The Cytoplasmic segment spans residues 46 to 49 (HPRY). A helical membrane pass occupies residues 50-74 (LLRVLNSFDEVYALLSLVVERYYLR). The Peroxisomal matrix segment spans residues 75–118 (NFGGSFTENFYSLKRERVLLTKNGEIPRAQLGAPGPVRESLKLR). Residues 119 to 156 (NSDVWKNLLVMVGIPYLKRKLDEGYDIHAAPQASLIMN) form a helical membrane-spanning segment. Residues 157 to 172 (GGPRYNPSDDLPPHPT) lie on the Cytoplasmic side of the membrane. The chain crosses the membrane as a helical span at residues 173 to 209 (IRQRFMHAYKWFLRNVYPSFNAAYYFSILAFNLAYLF). The Peroxisomal matrix portion of the chain corresponds to 210–280 (DNTKYSSPFL…YPQLLTSLRY (71 aa)). Residues 281–308 (FLPASIFALKFLEWWHASDFSRQLARKA) traverse the membrane as a helical segment. Over 309 to 489 (TDTLDIPAPI…GTEGLRRVLI (181 aa)) the chain is Cytoplasmic. Residues 316–359 (APITKGMISPSERKSRPPTKQKEDPESPKSALKTSSPHKRIQPP) are disordered. Residues 326 to 342 (SERKSRPPTKQKEDPES) are compositionally biased toward basic and acidic residues. Cysteine 384, cysteine 387, cysteine 404, and cysteine 407 together coordinate Zn(2+). The segment at 384-444 (CPVCLNQLTN…DSGDGIDADG (61 aa)) adopts an RING-type; degenerate zinc-finger fold. Residues 433 to 442 (EDDSGDGIDA) are compositionally biased toward acidic residues. Positions 433-469 (EDDSGDGIDADGDRNETESAAKTGKSRHGKWESGKGR) are disordered.

It belongs to the pex2/pex10/pex12 family. Component of the PEX2-PEX10-PEX12 retrotranslocation channel, composed of PEX2, PEX10 and PEX12.

It is found in the peroxisome membrane. It functions in the pathway protein modification; protein ubiquitination. Its function is as follows. Component of a retrotranslocation channel required for peroxisome organization by mediating export of the PEX5 receptor from peroxisomes to the cytosol, thereby promoting PEX5 recycling. The retrotranslocation channel is composed of PEX2, PEX10 and PEX12; each subunit contributing transmembrane segments that coassemble into an open channel that specifically allows the passage of PEX5 through the peroxisomal membrane. PEX12 also regulates PEX5 recycling by activating the E3 ubiquitin-protein ligase activity of PEX10. When PEX5 recycling is compromised, PEX12 stimulates PEX10-mediated polyubiquitination of PEX5, leading to its subsequent degradation. The chain is Peroxisome assembly protein 12 (PEX12) from Emericella nidulans (strain FGSC A4 / ATCC 38163 / CBS 112.46 / NRRL 194 / M139) (Aspergillus nidulans).